Consider the following 296-residue polypeptide: Thiamine-monophosphate kinase (296 aa).

Mg(2+) contacts are provided by Asp-32, Thr-46, and Asp-48. Residue Asp-55 coordinates substrate. Mg(2+)-binding residues include Asp-76 and Asp-121. ATP contacts are provided by residues 120–121 (GD) and Arg-144. Position 206 (Asp-206) interacts with Mg(2+). Ser-208 provides a ligand contact to ATP. Asp-209 lines the Mg(2+) pocket. Residue Tyr-293 coordinates substrate.

The protein belongs to the thiamine-monophosphate kinase family.

It catalyses the reaction thiamine phosphate + ATP = thiamine diphosphate + ADP. It participates in cofactor biosynthesis; thiamine diphosphate biosynthesis; thiamine diphosphate from thiamine phosphate: step 1/1. In terms of biological role, catalyzes the ATP-dependent phosphorylation of thiamine-monophosphate (TMP) to form thiamine-pyrophosphate (TPP), the active form of vitamin B1. The protein is Thiamine-monophosphate kinase of Archaeoglobus fulgidus (strain ATCC 49558 / DSM 4304 / JCM 9628 / NBRC 100126 / VC-16).